The primary structure comprises 748 residues: Ribonucleoprotein PTB-binding 1 (748 aa).

The interval 1-42 is disordered; sequence MAADVSVTHRPPLSPEAEAEAETPETVDRRTPEQELPPLDPE. Alanine 2 is subject to N-acetylalanine. Phosphoserine occurs at positions 6 and 14. Position 31 is a phosphothreonine (threonine 31). Positions 45 to 60 match the Nuclear localization signal motif; the sequence is RKRLEHTERQFRNRRK. 3 consecutive RRM domains span residues 59–130, 132–210, and 221–299; these read RKIL…LQPT, ALLC…WTDA, and RCLC…FCAP. The interval 307–401 is interaction with PTBP1; the sequence is LAALIAAQAT…QSQSQKKPGI (95 aa). Disordered stretches follow at residues 390–505, 525–647, and 672–731; these read QSQS…GEPP, SNLA…PLSH, and KAVG…QHSQ. Threonine 469 is subject to Phosphothreonine. Phosphoserine is present on residues serine 480, serine 576, serine 626, and serine 630. Residues 675–685 show a composition bias toward low complexity; the sequence is GSSPMGSSEGL. Serine 716 and serine 720 each carry phosphoserine. A Nuclear localization signal motif is present at residues 743–746; it reads KRKR.

In terms of assembly, interacts with PTBP1, RAVER2, VCL and ACTN1. Part of a complex containing RAVER1, VCL and ACTN1. As to expression, ubiquitous. Detected in aorta, brain, gut, heart, kidney, liver, spleen, uterus and skeletal muscle.

The protein resides in the nucleus. It localises to the cytoplasm. Functionally, cooperates with PTBP1 to modulate regulated alternative splicing events. Promotes exon skipping. Cooperates with PTBP1 to modulate switching between mutually exclusive exons during maturation of the TPM1 pre-mRNA. This is Ribonucleoprotein PTB-binding 1 (Raver1) from Rattus norvegicus (Rat).